The primary structure comprises 259 residues: Src-like-adapter 2 (259 aa).

The span at 1–20 (MGSLSSRGKTSSPSPSSSGP) shows a compositional bias: low complexity. The tract at residues 1–30 (MGSLSSRGKTSSPSPSSSGPDQEPVSMQPE) is disordered. G2 carries the N-myristoyl glycine lipid modification. Residues 31–91 (RHKVTAVALG…PSVYVAKVAH (61 aa)) form the SH3 domain. The SH2 domain occupies 93–190 (WLYEGLSREK…GICCPLREPC (98 aa)). Positions 190–259 (CVLQKLGPLP…SLAEDPLDDA (70 aa)) are SLA C-terminal.

As to quaternary structure, interacts (via its C-terminal domain) with CBL (phosphorylated). Interacts (via SH2 domain) with ZAP70 (phosphorylated) and CD3Z (phosphorylated). Interacts (via SH2 domain) with CSF1R (phosphorylated). Phosphorylated by CSF1R. In terms of tissue distribution, mainly expressed in immune system. Highly expressed in spleen and thymus and expressed at intermediate levels in lung. Not expressed in liver, heart and brain. Isoform 1 is predominant in lung and spleen, while isoform 2 is predominant in thymus.

The protein localises to the cytoplasm. It localises to the cell membrane. The protein resides in the cytoplasmic vesicle. Its subcellular location is the late endosome. Its function is as follows. Adapter protein, which negatively regulates T-cell receptor (TCR) signaling. Inhibits T-cell antigen-receptor induced activation of nuclear factor of activated T-cells. May act by linking signaling proteins such as ZAP70 with CBL, leading to a CBL dependent degradation of signaling proteins. The polypeptide is Src-like-adapter 2 (Sla2) (Mus musculus (Mouse)).